Here is a 351-residue protein sequence, read N- to C-terminus: C-X-C chemokine receptor type 1 (351 aa).

Over 1–44 the chain is Extracellular; that stretch reads MAEAEYFIWTNPEGDFEKEFGNITGMLPTGDYFIPCKRVPITNR. A glycan (N-linked (GlcNAc...) asparagine) is linked at Asn-22. Residues 45 to 71 form a helical membrane-spanning segment; that stretch reads QALVVFYALVSLLSLLGNSLVMLVILY. At 72-80 the chain is on the cytoplasmic side; that stretch reads RRRTRSVMD. Residues 81–101 form a helical membrane-spanning segment; it reads VYVLNLAIADLLFSLTLPFLA. Residues 102-116 are Extracellular-facing; that stretch reads VSKLKGWIFGTPLCK. Cys-115 and Cys-192 form a disulfide bridge. A helical membrane pass occupies residues 117-138; sequence MVSLLKEFNFFSGILLLACISV. Residues 139-159 lie on the Cytoplasmic side of the membrane; it reads DRYLAIVHATRTLARKRYLVK. Residues 160-179 traverse the membrane as a helical segment; the sequence is FVCVGIWGLSLILSLPFAIF. Topologically, residues 180 to 204 are extracellular; the sequence is RQAYKPFRSGTVCYEVLGEATTDFR. The helical transmembrane segment at 205–225 threads the bilayer; sequence MTLRGLSHIFGFLLPLLTMLV. Topologically, residues 226 to 247 are cytoplasmic; sequence CYGLTLRMLFKTHMRQKHRAMG. A helical membrane pass occupies residues 248–269; that stretch reads VIFAVVLVFLLCCLPYNLVLLS. Residues 270–290 lie on the Extracellular side of the membrane; the sequence is DTLLGAHLIEDTCERRNDIDQ. A helical membrane pass occupies residues 291 to 313; the sequence is ALYITEILGFSHSCLNPIIYAFV. Over 314–351 the chain is Cytoplasmic; it reads GQNFRHEFLKILANHGLVRKEVLTHRRVAFHTSLTAIY.

It belongs to the G-protein coupled receptor 1 family. Interacts with IL8. Interacts with GNAI2.

It is found in the cell membrane. Functionally, receptor to interleukin-8, which is a powerful neutrophils chemotactic factor. Binding of IL-8 to the receptor causes activation of neutrophils. This response is mediated via a G-protein that activates a phosphatidylinositol-calcium second messenger system. This Mus musculus (Mouse) protein is C-X-C chemokine receptor type 1 (Cxcr1).